Reading from the N-terminus, the 525-residue chain is GMP synthase [glutamine-hydrolyzing] (525 aa).

The region spanning 9–207 (RILILDFGSQ…VQDICGCEAL (199 aa)) is the Glutamine amidotransferase type-1 domain. Catalysis depends on Cys86, which acts as the Nucleophile. Residues His181 and Glu183 contribute to the active site. The GMPS ATP-PPase domain occupies 208–400 (WTASNIVEDA…LGLPYDMVYR (193 aa)). 235–241 (SGGVDSS) lines the ATP pocket.

Homodimer.

It carries out the reaction XMP + L-glutamine + ATP + H2O = GMP + L-glutamate + AMP + diphosphate + 2 H(+). It functions in the pathway purine metabolism; GMP biosynthesis; GMP from XMP (L-Gln route): step 1/1. In terms of biological role, catalyzes the synthesis of GMP from XMP. The sequence is that of GMP synthase [glutamine-hydrolyzing] from Pseudomonas putida (strain GB-1).